The chain runs to 248 residues: NADH dehydrogenase [ubiquinone] flavoprotein 2, mitochondrial (248 aa).

A mitochondrion-targeting transit peptide spans Met-1–Asn-31. Residues Cys-134, Cys-139, Cys-175, and Cys-179 each contribute to the [2Fe-2S] cluster site. Tyr-192 bears the Phosphotyrosine; by SRC mark. Positions Gly-229–Leu-248 are disordered.

Belongs to the complex I 24 kDa subunit family. In terms of assembly, core subunit of respiratory chain NADH dehydrogenase (Complex I) which is composed of 45 different subunits. This is a component of the flavoprotein-sulfur (FP) fragment of the enzyme. [2Fe-2S] cluster is required as a cofactor.

It localises to the mitochondrion inner membrane. It carries out the reaction a ubiquinone + NADH + 5 H(+)(in) = a ubiquinol + NAD(+) + 4 H(+)(out). In terms of biological role, core subunit of the mitochondrial membrane respiratory chain NADH dehydrogenase (Complex I) which catalyzes electron transfer from NADH through the respiratory chain, using ubiquinone as an electron acceptor. Parts of the peripheral arm of the enzyme, where the electrons from NADH are accepted by flavin mononucleotide (FMN) and then passed along a chain of iron-sulfur clusters by electron tunnelling to the final acceptor ubiquinone. Contains one iron-sulfur cluster. This chain is NADH dehydrogenase [ubiquinone] flavoprotein 2, mitochondrial, found in Rattus norvegicus (Rat).